A 238-amino-acid polypeptide reads, in one-letter code: Flagellar L-ring protein (238 aa).

The first 23 residues, 1 to 23, serve as a signal peptide directing secretion; sequence MVKLFSYKIKYYLTAFFIIIIQS. The N-palmitoyl cysteine moiety is linked to residue cysteine 24. Residue cysteine 24 is the site of S-diacylglycerol cysteine attachment.

This sequence belongs to the FlgH family. In terms of assembly, the basal body constitutes a major portion of the flagellar organelle and consists of four rings (L,P,S, and M) mounted on a central rod.

Its subcellular location is the cell outer membrane. The protein localises to the bacterial flagellum basal body. Its function is as follows. Assembles around the rod to form the L-ring and probably protects the motor/basal body from shearing forces during rotation. In Buchnera aphidicola subsp. Schizaphis graminum (strain Sg), this protein is Flagellar L-ring protein.